Here is a 553-residue protein sequence, read N- to C-terminus: Pumilio domain-containing protein 5 (553 aa).

Pumilio repeat units follow at residues 146–184, 185–223, 224–260, 261–296, 297–335, 347–384, 386–421, and 432–472; these read DVVSNGSLIDFAMDRTGVKFLERHFPEDHDNEMHFVLFD, KLTEQGAVFTSLCRSAAGNFIIQKFVEHATLDEQERLVR, KMCDNGLIEMCLDKFACRVVQMSIQKFDVSIAMKLVE, KISSLDFLPLCTDQCAIHVLQKVVKLLPISAWSFFV, KFLCRDDNLMTVCQDKYGCRLVQQTIDKLSDNPKLHCFN, SVARNCFRLSSNEFANYVVQYVIKSSGVMEMYRDTIIE, CLLRNILSMSQDKYASHVVEGAFLFAPPLLLSEMMD, and ETNR…KMVA. An RNA-binding region spans residues 499 to 514; sequence FSSGKKIIESLQKLNV.

In terms of tissue distribution, detected in differentiating oocytes with highest levels observed in developing ooctyes in the distal portion of the proximal gonad.

The protein localises to the cytoplasm. Its subcellular location is the P-body. Its function is as follows. RNA-binding protein that binds to the consensus sequence 5'-CUCUGUAUCUUGU-3' in mRNA 3'-UTRs and modulates mRNA expression and stability. Functions redundantly with puf-6 and puf-7 in oocyte formation and organization, early embryonic cell divisions, and repression of expression of glp-1 and other maternal mRNAs in late oogenesis. The polypeptide is Pumilio domain-containing protein 5 (Caenorhabditis elegans).